A 348-amino-acid chain; its full sequence is Ferredoxin--NADP reductase (348 aa).

FAD is bound by residues T26, E45, Q53, Y58, A98, F133, D299, and S340.

The protein belongs to the ferredoxin--NADP reductase type 2 family. In terms of assembly, homodimer. FAD is required as a cofactor.

It catalyses the reaction 2 reduced [2Fe-2S]-[ferredoxin] + NADP(+) + H(+) = 2 oxidized [2Fe-2S]-[ferredoxin] + NADPH. This Prosthecochloris aestuarii (strain DSM 271 / SK 413) protein is Ferredoxin--NADP reductase.